The following is a 203-amino-acid chain: N-(5'-phosphoribosyl)anthranilate isomerase (203 aa).

It belongs to the TrpF family.

It catalyses the reaction N-(5-phospho-beta-D-ribosyl)anthranilate = 1-(2-carboxyphenylamino)-1-deoxy-D-ribulose 5-phosphate. Its pathway is amino-acid biosynthesis; L-tryptophan biosynthesis; L-tryptophan from chorismate: step 3/5. This Thermoanaerobacter sp. (strain X514) protein is N-(5'-phosphoribosyl)anthranilate isomerase.